Here is a 500-residue protein sequence, read N- to C-terminus: Gamma-glutamylanilide synthase (500 aa).

Positions 32-136 constitute a GS beta-grasp domain; it reads LGLEMIRLSW…MLADLHWKSG (105 aa). Residues 143 to 500 form the GS catalytic domain; that stretch reads PRGIMKKAVK…WEQKEYFNLL (358 aa).

The protein belongs to the glutamine synthetase family. As to quaternary structure, homohexamer.

The enzyme catalyses aniline + L-glutamate + ATP = N(5)-phenyl-L-glutamine + ADP + phosphate. Its function is as follows. Involved in the initial oxidation of aniline to catechol by the release of its amino group. Catalyzes the ATP-dependent ligation of L-glutamate to aniline to yield gamma-glutamylanilide (gamma-GA). AtdA1 has a broad substrate range and is able to convert the following anilines, including chlorinated and methylated forms of aniline: aniline (100%), o-chloroaniline (92%), m-chloroaniline (69%), p-chloroaniline (92%), o-methylaniline (40%), m-methylaniline (27%) and p-methylaniline (45%). The protein is Gamma-glutamylanilide synthase of Acinetobacter sp.